The chain runs to 164 residues: Pyruvoyl-dependent arginine decarboxylase (164 aa).

Ser-52 carries the post-translational modification Pyruvic acid (Ser).

Belongs to the PdaD family. Pyruvate serves as cofactor.

The enzyme catalyses L-arginine + H(+) = agmatine + CO2. The chain is Pyruvoyl-dependent arginine decarboxylase from Methanococcus maripaludis (strain C7 / ATCC BAA-1331).